A 643-amino-acid chain; its full sequence is Pseudouridylate synthase PUS7L (643 aa).

Asp-284 functions as the Nucleophile in the catalytic mechanism. The region spanning 370–597 is the TRUD domain; that stretch reads GFVNYYGPQR…PGCYRPLLAK (228 aa).

It belongs to the pseudouridine synthase TruD family.

The catalysed reaction is a uridine in mRNA = a pseudouridine in mRNA. Its function is as follows. Pseudouridine synthase that catalyzes pseudouridylation of mRNAs. In Danio rerio (Zebrafish), this protein is Pseudouridylate synthase PUS7L (pus7l).